Here is a 434-residue protein sequence, read N- to C-terminus: Nuclear distribution protein PAC1 (434 aa).

Positions 8-40 (QKDDLHKAMLDYLYANNHTAAFNALKESAGITY) constitute a LisH domain. A coiled-coil region spans residues 57–83 (TSVIRLQKKIMELENRNAALQEELSMS). WD repeat units lie at residues 106-147 (GHRA…RTLK), 149-187 (HTKPVNDLDFDHKGHLLVTCSSDLFIKIWDSQNEWKNTK), 191-230 (GHDHAVSAVRFMPGDQLIVSASRDRTIRVFDVASTHQVRT), 233-272 (GHSEWVRCVIPSADGTMLASGSKDQTVRLWDPLTGEPKSE), 275-334 (GHEN…MIRN), 337-378 (GHDN…RIVE), and 401-434 (KKVNGVDSVDAEPEKVVNVVATGSVDETIKIWLP).

This sequence belongs to the WD repeat LIS1/nudF family. As to quaternary structure, self-associates. Interacts with NDL1 and dynein.

It is found in the cytoplasm. It localises to the cytoskeleton. The protein resides in the spindle pole. Its function is as follows. Positively regulates the activity of the minus-end directed microtubule motor protein dynein. May enhance dynein-mediated microtubule sliding by targeting dynein to the microtubule plus end. Required for nuclear migration during vegetative growth as well as development. Required for retrograde early endosome (EE) transport from the hyphal tip. Required for localization of dynein to the mitotic spindle poles. Recruits additional proteins to the dynein complex at SPBs. The sequence is that of Nuclear distribution protein PAC1 from Coprinopsis cinerea (strain Okayama-7 / 130 / ATCC MYA-4618 / FGSC 9003) (Inky cap fungus).